The following is a 562-amino-acid chain: Membrane protein insertase YidC (562 aa).

Residues 1–21 (MDIKRTILIVALAIVTYVGVL) form a helical membrane-spanning segment. Positions 42-74 (TAPGIPDTAAGNNGSASADVPSATGNTTSAAPL) are disordered. A run of 5 helical transmembrane segments spans residues 343-363 (LELT…FWLL), 369-389 (ILGN…GLFF), 439-459 (LGGC…YWVL), 470-490 (WILW…PIIM), and 517-537 (PIIF…YWVV).

This sequence belongs to the OXA1/ALB3/YidC family. Type 1 subfamily. In terms of assembly, interacts with the Sec translocase complex via SecD. Specifically interacts with transmembrane segments of nascent integral membrane proteins during membrane integration.

Its subcellular location is the cell inner membrane. Functionally, required for the insertion and/or proper folding and/or complex formation of integral membrane proteins into the membrane. Involved in integration of membrane proteins that insert both dependently and independently of the Sec translocase complex, as well as at least some lipoproteins. Aids folding of multispanning membrane proteins. This chain is Membrane protein insertase YidC, found in Pseudomonas syringae pv. tomato (strain ATCC BAA-871 / DC3000).